The following is a 522-amino-acid chain: Flavin-dependent halogenase armH1 (522 aa).

Residues Gly-16, Ala-19, and Glu-49 each coordinate FAD. Residues Ser-328 and Gly-329 each coordinate chloride. Ile-330 serves as a coordination point for FAD.

This sequence belongs to the flavin-dependent halogenase family.

The catalysed reaction is melleolide F + FADH2 + chloride + O2 = 6'-chloromelleolide F + FAD + 2 H2O + H(+). Functionally, flavin-dependent halogenase involved in the biosynthesis of melleolides, a range of antifungal and phytotoxic polyketide derivatives composed of an orsellinic acid (OA) moiety esterified to various sesquiterpene alcohols. The halogenase catalyzes the transfer of a single chlorine atom to the melleolide backbone, resulting in a 6'-chloromelleolide product. The enzyme acts on free substrate and does not depend on carrier-protein-dependent acceptor molecules. The sequence is that of Flavin-dependent halogenase armH1 from Armillaria mellea (Honey mushroom).